Reading from the N-terminus, the 154-residue chain is Urease accessory protein UreE (154 aa).

A disordered region spans residues 134–154 (PESGAYGKSGHNHGHSHSHED). Positions 143–154 (GHNHGHSHSHED) are enriched in basic residues.

The protein belongs to the UreE family.

The protein localises to the cytoplasm. Functionally, involved in urease metallocenter assembly. Binds nickel. Probably functions as a nickel donor during metallocenter assembly. The chain is Urease accessory protein UreE from Alteromonas mediterranea (strain DSM 17117 / CIP 110805 / LMG 28347 / Deep ecotype).